A 295-amino-acid polypeptide reads, in one-letter code: Hepatic leukemia factor (295 aa).

The segment covering 37 to 52 (EDAFSKDKDKEKKLDD) has biased composition (basic and acidic residues). Disordered stretches follow at residues 37–70 (EDAF…PTLW) and 93–167 (SENG…IDPD). The bZIP domain occupies 225-288 (DDKYWARRRK…GKCKNILAKY (64 aa)). The interval 227-247 (KYWARRRKNNMAAKRSRDARR) is basic motif. The tract at residues 248–255 (LKENQIAI) is leucine-zipper.

This sequence belongs to the bZIP family. PAR subfamily. Binds DNA specifically as homodimer or heterodimer with other PAR factors. Highly expressed in liver; lower levels in lung and kidney.

The protein resides in the nucleus. The chain is Hepatic leukemia factor (HLF) from Homo sapiens (Human).